A 328-amino-acid polypeptide reads, in one-letter code: D-cysteine desulfhydrase (328 aa).

Position 51 is an N6-(pyridoxal phosphate)lysine (lysine 51).

The protein belongs to the ACC deaminase/D-cysteine desulfhydrase family. As to quaternary structure, homodimer. Requires pyridoxal 5'-phosphate as cofactor.

It catalyses the reaction D-cysteine + H2O = hydrogen sulfide + pyruvate + NH4(+) + H(+). Its function is as follows. Catalyzes the alpha,beta-elimination reaction of D-cysteine and of several D-cysteine derivatives. It could be a defense mechanism against D-cysteine. The sequence is that of D-cysteine desulfhydrase from Escherichia coli O7:K1 (strain IAI39 / ExPEC).